A 311-amino-acid polypeptide reads, in one-letter code: MYAHLALILGCWTVVLQGAETDVGERADNRRPIWNLAHMVNAVAQIPDFLDLGANALEADVTFKGSVPTYTYHGTPCDFGRDCIRWEYFNVFLKTLREYTTPGNAKYRDGFILFVLDLKTGSLSNDQVRPAGENVAKELLQNYWNNGNNGGRAYVVLSLPDIGHYEFVRGFKEVLKKEGHEDLLEKVGYDFSGPYLPSLPTLDATHEAYKKAGVDGHIWLSDGLTNFSPLGDMARLKEAIKSRDSANGFINKIYYWSVDKVSTTKAALDVGVDGIMTNYPNVLIGVLKESGYNDKYRLATYDDNPWETFKN.

An N-terminal signal peptide occupies residues 1–21 (MYAHLALILGCWTVVLQGAET). Residues 22–26 (DVGER) constitute a propeptide that is removed on maturation. Histidine 38 is a catalytic residue. Residues glutamate 58 and aspartate 60 each contribute to the Mg(2+) site. The active-site Nucleophile is the histidine 73. A disulfide bond links cysteine 77 and cysteine 83. Aspartate 117 lines the Mg(2+) pocket.

It belongs to the arthropod phospholipase D family. Class I subfamily. Mg(2+) serves as cofactor. In terms of tissue distribution, expressed by the venom gland.

The protein resides in the secreted. The enzyme catalyses an N-(acyl)-sphingosylphosphocholine = an N-(acyl)-sphingosyl-1,3-cyclic phosphate + choline. The catalysed reaction is an N-(acyl)-sphingosylphosphoethanolamine = an N-(acyl)-sphingosyl-1,3-cyclic phosphate + ethanolamine. It carries out the reaction a 1-acyl-sn-glycero-3-phosphocholine = a 1-acyl-sn-glycero-2,3-cyclic phosphate + choline. It catalyses the reaction a 1-acyl-sn-glycero-3-phosphoethanolamine = a 1-acyl-sn-glycero-2,3-cyclic phosphate + ethanolamine. Its function is as follows. Dermonecrotic toxins cleave the phosphodiester linkage between the phosphate and headgroup of certain phospholipids (sphingolipid and lysolipid substrates), forming an alcohol (often choline) and a cyclic phosphate. This toxin acts on sphingomyelin (SM) with high activity. It also act on acyl- and alkyl-lysophosphatidylcholine (LPC), but not on sphingosylphosphorylcholine (SPC) and phosphatidylcholine (PC). It may also act on ceramide phosphoethanolamine (CPE), and lysophosphatidylethanolamine (LPE), but not on lysophosphatidylserine (LPS), and lysophosphatidylglycerol (LPG). It acts by transphosphatidylation, releasing exclusively cyclic phosphate products as second products. Induces complement-dependent hemolysis and dermonecrosis. Also induces increased vascular permeability, edema, inflammatory response, and platelet aggregation. The polypeptide is Dermonecrotic toxin LlSicTox-alphaIII1i (Loxosceles laeta (South American recluse spider)).